A 244-amino-acid polypeptide reads, in one-letter code: 5-oxoprolinase subunit A (244 aa).

This sequence belongs to the LamB/PxpA family. As to quaternary structure, forms a complex composed of PxpA, PxpB and PxpC.

It carries out the reaction 5-oxo-L-proline + ATP + 2 H2O = L-glutamate + ADP + phosphate + H(+). Functionally, catalyzes the cleavage of 5-oxoproline to form L-glutamate coupled to the hydrolysis of ATP to ADP and inorganic phosphate. The sequence is that of 5-oxoprolinase subunit A from Shigella boydii serotype 18 (strain CDC 3083-94 / BS512).